Here is a 608-residue protein sequence, read N- to C-terminus: Prolactin receptor (608 aa).

The N-terminal stretch at 1-19 (MSSALAYMLLVLSISLLNG) is a signal peptide. The Extracellular portion of the chain corresponds to 20–229 (QSPPGKPEIH…EIPNDFTLKD (210 aa)). 2 Fibronectin type-III domains span residues 22–122 (PPGK…IVEP) and 124–224 (PPRN…IPND). Cysteine 31 and cysteine 41 are oxidised to a cystine. N-linked (GlcNAc...) asparagine glycosylation is present at asparagine 54. An intrachain disulfide couples cysteine 70 to cysteine 81. Asparagine 99 and asparagine 127 each carry an N-linked (GlcNAc...) asparagine glycan. 2 residues coordinate Zn(2+): aspartate 206 and histidine 207. The WSXWS motif motif lies at 210–214 (WSRWG). The helical transmembrane segment at 230–253 (TTVWIIVAVLSAVICLIMVWAVAL) threads the bilayer. The Cytoplasmic portion of the chain corresponds to 254 to 608 (KGYSMMTCIF…DPTCFMHSFH (355 aa)). The Box 1 motif motif lies at 262–270 (IFPPVPGPK). 3 disordered regions span residues 317-355 (DERL…HSLL), 377-419 (KPEN…TRRS), and 466-487 (GAKS…EKGP). Residues 318 to 327 (ERLMPSHSKE) show a composition bias toward basic and acidic residues. The segment covering 345 to 354 (GHGSYDSHSL) has biased composition (low complexity). Residues 398-408 (CHTDTSKSTTW) are compositionally biased toward polar residues.

The protein belongs to the type I cytokine receptor family. Type 1 subfamily. Interacts with SMARCA1. Interacts with NEK3 and VAV2 and this interaction is prolactin-dependent.

The protein resides in the membrane. Functionally, this is a receptor for the anterior pituitary hormone prolactin. The sequence is that of Prolactin receptor (Prlr) from Mus musculus (Mouse).